Consider the following 205-residue polypeptide: Dephospho-CoA kinase (205 aa).

The 197-residue stretch at 5 to 201 folds into the DPCK domain; sequence VVGLTGGIGS…QRYLQLSGNH (197 aa). An ATP-binding site is contributed by 13–18; that stretch reads GSGKTT.

This sequence belongs to the CoaE family.

It is found in the cytoplasm. The catalysed reaction is 3'-dephospho-CoA + ATP = ADP + CoA + H(+). Its pathway is cofactor biosynthesis; coenzyme A biosynthesis; CoA from (R)-pantothenate: step 5/5. Functionally, catalyzes the phosphorylation of the 3'-hydroxyl group of dephosphocoenzyme A to form coenzyme A. The protein is Dephospho-CoA kinase of Shewanella oneidensis (strain ATCC 700550 / JCM 31522 / CIP 106686 / LMG 19005 / NCIMB 14063 / MR-1).